We begin with the raw amino-acid sequence, 166 residues long: Short form salivary protein D7R5 (166 aa).

The first 22 residues, 1–22, serve as a signal peptide directing secretion; sequence MEWRYFVVIALICPLIIVETLA. 3 cysteine pairs are disulfide-bonded: Cys26–Cys58, Cys39–Cys166, and Cys98–Cys117.

It belongs to the PBP/GOBP family.

It is found in the secreted. Functionally, in contrast to the related D7 salivary proteins, does not bind biogenic amines such as serotonin, noradrenaline, histamine and adrenaline. It is hypothesized that either D7r5 evolved an as yet unknown function or is becoming a pseudogene. This is Short form salivary protein D7R5 from Anopheles gambiae (African malaria mosquito).